Reading from the N-terminus, the 31-residue chain is Cytochrome b6-f complex subunit 6 (31 aa).

Residues 4–24 form a helical membrane-spanning segment; it reads VISYLSLLFISFLFALTLFIV.

The protein belongs to the PetL family. As to quaternary structure, the 4 large subunits of the cytochrome b6-f complex are cytochrome b6, subunit IV (17 kDa polypeptide, PetD), cytochrome f and the Rieske protein, while the 4 small subunits are PetG, PetL, PetM and PetN. The complex functions as a dimer.

It is found in the plastid. The protein localises to the chloroplast thylakoid membrane. Component of the cytochrome b6-f complex, which mediates electron transfer between photosystem II (PSII) and photosystem I (PSI), cyclic electron flow around PSI, and state transitions. PetL is important for photoautotrophic growth as well as for electron transfer efficiency and stability of the cytochrome b6-f complex. In Chara vulgaris (Common stonewort), this protein is Cytochrome b6-f complex subunit 6.